The chain runs to 1778 residues: Internalin I (1778 aa).

Positions 1-28 (MKKKFSIVIISVLLLGYLAPFDTLLVGA) are cleaved as a signal peptide. The segment at 36–101 (DTAVKTAEAD…NIKTEINTDK (66 aa)) is disordered. A compositionally biased stretch (acidic residues) spans 51 to 62 (IESETGSDDETA). Over residues 63–88 (EEPKEAKEAEASKETTEKEEKAKTEE) the composition is skewed to basic and acidic residues. LRR repeat units follow at residues 155 to 179 (AISQLDLSGETGNDPTDISNIEGLQ), 183 to 204 (NLTSLNLSENNISDLAPLKDLV), 205 to 227 (NLVSLNLSSNRTLVNLSGVEDLV), 228 to 250 (NLQELNVSANKALEDISQVASLP), 251 to 272 (VLKEISAQGCNIKTLELKNPAG), 277 to 298 (ELETFYLQENDLTNLTSLAKLP), 299 to 321 (KLKNLYIKGNASLKSLETLNGAT), 322 to 344 (KLQLIDASNCTDLETLGDISGLS), 345 to 367 (ELEMIQLSGCSKLKEITSLKNLP), 368 to 389 (NLVNITADSCAIEDLGTLNNLP), 390 to 412 (KLQTLVLSDNENLTNITAITDLP), 413 to 434 (QLKTLTLDGCGITSIGTLDNLP), 435 to 456 (KLEKLDLKENQITSISEITDLP), 457 to 478 (RLSYLDVSVNNLTTIGDLKKLP), 479 to 500 (LLEWLNVSSNRLSDVSTLTNFP), 501 to 522 (SLNYINISNNVIRTVGKMTELP), 523 to 544 (SLKEFYAQNNSISDISMIHDMP), 545 to 566 (NLRKVDASNNLITNIGTFDNLP), 567 to 588 (KLQSLDVHSNRITSTSVIHDLP), 589 to 610 (SLETFNAQTNLITNIGTMDNLP), 611 to 632 (DLTYVNLSFNRIPSLAPIGDLP), 633 to 653 (NLETLIVSDNNSYLRSLGTMD), 657 to 678 (KLRILDLQNNYLNYTGTEGNLS), 685 to 707 (NLTELNLRNNVYIDDISGLSTLS), 708 to 729 (RLIYLNLDSNKIEDISALSNLT), 730 to 751 (NLQELTLENNKIENISALSDLE), and 752 to 773 (NLNKLVVSKNKIIDISPVANMV). Residues 785–872 (TYTLPTVLSY…SAAKVTADAE (88 aa)) enclose the LRRCT domain. MucBP domains follow at residues 1510 to 1569 (DAAA…EQTV), 1575 to 1634 (AIKP…PQTI), and 1644 to 1705 (SKKS…SQTV). Residues 1716-1742 (SKDDPKVKGKTNQPSSTDTKLKVDNNS) form a disordered region. Over residues 1725 to 1742 (KTNQPSSTDTKLKVDNNS) the composition is skewed to polar residues. Positions 1743–1747 (LPATG) match the LPXTG sorting signal motif. Thr1746 carries the post-translational modification Pentaglycyl murein peptidoglycan amidated threonine. Positions 1747-1778 (GDTENMILAVLIGFNMLIVASIFLFRKPKTNQ) are cleaved as a propeptide — removed by sortase.

This sequence belongs to the internalin family.

The protein localises to the secreted. It is found in the cell wall. In terms of biological role, a role in virulence could not be demonstrated. This Listeria monocytogenes serovar 1/2a (strain ATCC BAA-679 / EGD-e) protein is Internalin I (inlI).